Consider the following 248-residue polypeptide: Putative homeobox-leucine zipper protein HOX26 (248 aa).

Residues 50-118 form a disordered region; sequence KKVAAAAVVA…GDEEGASRKK (69 aa). The segment covering 79–89 has biased composition (basic residues); it reads RQRRSCKKGRR. The homeobox DNA-binding region spans 114–173; the sequence is ASRKKLRLTGEQATLLEDSFRAHNILSHAEKQELAGKLGLSARQVEVWFQNRRARTKLKQ. The leucine-zipper stretch occupies residues 172–216; it reads KQTEADCDLLRRWCDHLAADNARLRRDLAELRRSSSSPPVSGLAV.

Belongs to the HD-ZIP homeobox family. Class II subfamily.

The protein localises to the nucleus. Its function is as follows. Probable transcription factor. The polypeptide is Putative homeobox-leucine zipper protein HOX26 (HOX26) (Oryza sativa subsp. japonica (Rice)).